The sequence spans 239 residues: Ribosomal RNA small subunit methyltransferase G (239 aa).

S-adenosyl-L-methionine contacts are provided by residues G77, F82, 128–129 (AE), and R147.

Belongs to the methyltransferase superfamily. RNA methyltransferase RsmG family.

It localises to the cytoplasm. Its function is as follows. Specifically methylates the N7 position of guanine in position 535 of 16S rRNA. The protein is Ribosomal RNA small subunit methyltransferase G of Bacillus cereus (strain AH187).